Reading from the N-terminus, the 422-residue chain is UDP-N-acetylglucosamine 1-carboxyvinyltransferase (422 aa).

22–23 (KN) is a binding site for phosphoenolpyruvate. Arg92 is a UDP-N-acetyl-alpha-D-glucosamine binding site. Cys116 serves as the catalytic Proton donor. Cys116 is modified (2-(S-cysteinyl)pyruvic acid O-phosphothioketal). UDP-N-acetyl-alpha-D-glucosamine-binding positions include 121 to 125 (RPVDQ), Asp307, and Ile329.

Belongs to the EPSP synthase family. MurA subfamily.

It localises to the cytoplasm. The enzyme catalyses phosphoenolpyruvate + UDP-N-acetyl-alpha-D-glucosamine = UDP-N-acetyl-3-O-(1-carboxyvinyl)-alpha-D-glucosamine + phosphate. The protein operates within cell wall biogenesis; peptidoglycan biosynthesis. Cell wall formation. Adds enolpyruvyl to UDP-N-acetylglucosamine. The protein is UDP-N-acetylglucosamine 1-carboxyvinyltransferase of Psychrobacter arcticus (strain DSM 17307 / VKM B-2377 / 273-4).